The primary structure comprises 139 residues: Large ribosomal subunit protein uL16 (139 aa).

This sequence belongs to the universal ribosomal protein uL16 family. As to quaternary structure, part of the 50S ribosomal subunit.

Its function is as follows. Binds 23S rRNA and is also seen to make contacts with the A and possibly P site tRNAs. This is Large ribosomal subunit protein uL16 from Treponema denticola (strain ATCC 35405 / DSM 14222 / CIP 103919 / JCM 8153 / KCTC 15104).